We begin with the raw amino-acid sequence, 103 residues long: DNA-binding protein TRF1 (103 aa).

DNA-binding protein that recognizes the inverted terminal repeats of the pGKl linear DNA plasmids. The protein is DNA-binding protein TRF1 (TRF1) of Kluyveromyces lactis (strain ATCC 8585 / CBS 2359 / DSM 70799 / NBRC 1267 / NRRL Y-1140 / WM37) (Yeast).